The following is a 506-amino-acid chain: F-box protein At4g02760 (506 aa).

Residues 115-161 enclose the F-box domain; the sequence is TSWPLLPELTIKVFSMLDTKSLMQASACCTMFNKCAMDRVCYSHIDL. The tract at residues 452–506 is disordered; the sequence is TFVAEFRSPSPSESDVRSPSPSSSSDSSSSSDSSSSSSSGESSDESGTEEEEDED. Positions 459–492 are enriched in low complexity; it reads SPSPSESDVRSPSPSSSSDSSSSSDSSSSSSSGE. Residues 493 to 506 show a composition bias toward acidic residues; sequence SSDESGTEEEEDED.

This is F-box protein At4g02760 from Arabidopsis thaliana (Mouse-ear cress).